Consider the following 270-residue polypeptide: uncharacterized protein (270 aa).

The Proton donor role is filled by His-171. Residue Cys-261 is the Nucleophile of the active site.

Belongs to the DDAH family.

This is an uncharacterized protein from Aeropyrum pernix (strain ATCC 700893 / DSM 11879 / JCM 9820 / NBRC 100138 / K1).